Consider the following 206-residue polypeptide: Ribonuclease HII (206 aa).

The RNase H type-2 domain maps to 27-206 (ARIAGVDEAG…CALHRRSFKH (180 aa)). Aspartate 33, glutamate 34, and aspartate 125 together coordinate a divalent metal cation.

This sequence belongs to the RNase HII family. Requires Mn(2+) as cofactor. Mg(2+) serves as cofactor.

Its subcellular location is the cytoplasm. It catalyses the reaction Endonucleolytic cleavage to 5'-phosphomonoester.. Functionally, endonuclease that specifically degrades the RNA of RNA-DNA hybrids. This chain is Ribonuclease HII, found in Moorella thermoacetica (strain ATCC 39073 / JCM 9320).